Consider the following 147-residue polypeptide: Small ribosomal subunit protein uS5 (147 aa).

Residues 9–72 (FQEVVVNIGR…DDAFKNLIHV (64 aa)) enclose the S5 DRBM domain.

The protein belongs to the universal ribosomal protein uS5 family. As to quaternary structure, part of the 30S ribosomal subunit. Contacts proteins S4 and S8.

With S4 and S12 plays an important role in translational accuracy. In terms of biological role, located at the back of the 30S subunit body where it stabilizes the conformation of the head with respect to the body. This chain is Small ribosomal subunit protein uS5, found in Helicobacter pylori (strain J99 / ATCC 700824) (Campylobacter pylori J99).